The chain runs to 170 residues: Cilia- and flagella-associated protein 276 (170 aa).

Disordered stretches follow at residues M1–L37 and H151–T170.

As to quaternary structure, microtubule inner protein component of sperm flagellar doublet microtubules. In terms of tissue distribution, expressed in trachea multiciliated cells.

It is found in the cytoplasm. Its subcellular location is the cytoskeleton. The protein resides in the cilium axoneme. The protein localises to the flagellum axoneme. Functionally, microtubule inner protein (MIP) part of the dynein-decorated doublet microtubules (DMTs) in cilia axoneme, which is required for motile cilia beating. May play an important role for the maintenance of myelin-axon integrity. May affect intracellular Ca(2+) homeostasis. This is Cilia- and flagella-associated protein 276 from Bos taurus (Bovine).